Consider the following 195-residue polypeptide: Imidazoleglycerol-phosphate dehydratase (195 aa).

Belongs to the imidazoleglycerol-phosphate dehydratase family.

Its subcellular location is the cytoplasm. It catalyses the reaction D-erythro-1-(imidazol-4-yl)glycerol 3-phosphate = 3-(imidazol-4-yl)-2-oxopropyl phosphate + H2O. It functions in the pathway amino-acid biosynthesis; L-histidine biosynthesis; L-histidine from 5-phospho-alpha-D-ribose 1-diphosphate: step 6/9. In Haloarcula marismortui (strain ATCC 43049 / DSM 3752 / JCM 8966 / VKM B-1809) (Halobacterium marismortui), this protein is Imidazoleglycerol-phosphate dehydratase.